Reading from the N-terminus, the 115-residue chain is NAD(P)H-quinone oxidoreductase subunit M (115 aa).

Belongs to the complex I NdhM subunit family. NDH-1 can be composed of about 15 different subunits; different subcomplexes with different compositions have been identified which probably have different functions.

The protein localises to the cellular thylakoid membrane. It catalyses the reaction a plastoquinone + NADH + (n+1) H(+)(in) = a plastoquinol + NAD(+) + n H(+)(out). The catalysed reaction is a plastoquinone + NADPH + (n+1) H(+)(in) = a plastoquinol + NADP(+) + n H(+)(out). In terms of biological role, NDH-1 shuttles electrons from an unknown electron donor, via FMN and iron-sulfur (Fe-S) centers, to quinones in the respiratory and/or the photosynthetic chain. The immediate electron acceptor for the enzyme in this species is believed to be plastoquinone. Couples the redox reaction to proton translocation, and thus conserves the redox energy in a proton gradient. Cyanobacterial NDH-1 also plays a role in inorganic carbon-concentration. The polypeptide is NAD(P)H-quinone oxidoreductase subunit M (Prochlorococcus marinus (strain MIT 9211)).